Here is a 204-residue protein sequence, read N- to C-terminus: Large ribosomal subunit protein uL4 (204 aa).

The disordered stretch occupies residues 49–75; that stretch reads TKGRSEVSGGGKKPWRQKGRGGARAGS.

This sequence belongs to the universal ribosomal protein uL4 family. In terms of assembly, part of the 50S ribosomal subunit.

In terms of biological role, one of the primary rRNA binding proteins, this protein initially binds near the 5'-end of the 23S rRNA. It is important during the early stages of 50S assembly. It makes multiple contacts with different domains of the 23S rRNA in the assembled 50S subunit and ribosome. Its function is as follows. Forms part of the polypeptide exit tunnel. In Campylobacter hominis (strain ATCC BAA-381 / DSM 21671 / CCUG 45161 / LMG 19568 / NCTC 13146 / CH001A), this protein is Large ribosomal subunit protein uL4.